A 787-amino-acid polypeptide reads, in one-letter code: Signal transducer and activator of transcription 5B (787 aa).

Residue Tyr90 is modified to Phosphotyrosine. Phosphoserine is present on residues Ser128 and Ser193. Residues 232–321 (KHQKTLQLLR…MLAEVNATIT (90 aa)) are required for interaction with NMI. Residues 589 to 686 (WNDGAILGFV…EVYSKYYTPV (98 aa)) enclose the SH2 domain. A Phosphotyrosine modification is found at Tyr682. Tyr699 carries the phosphotyrosine; by HCK, JAK and PTK6 modification.

Belongs to the transcription factor STAT family. As to quaternary structure, upon activation, forms homodimers. Forms also heterodimers with related family members. Binds NR3C1. Interacts with NCOA1. Interacts with NMI. Interacts with SOCS7. Interacts (via SH2 domain) with INSR. Interacts with CPEB3; this inhibits STAT5B-mediated transcriptional activation. Tyrosine phosphorylated in response to signaling via activated KIT, resulting in translocation to the nucleus. Tyrosine phosphorylated in response to signaling via activated FLT3; wild-type FLT3 results in much weaker phosphorylation than constitutively activated mutant FLT3. Alternatively, can be phosphorylated by JAK2. Phosphorylation at Tyr-699 by PTK6 or HCK leads to an increase of its transcriptional activity.

It is found in the cytoplasm. The protein resides in the nucleus. Functionally, carries out a dual function: signal transduction and activation of transcription. Mediates cellular responses to the cytokine KITLG/SCF and other growth factors. Binds to the GAS element and activates PRL-induced transcription. Positively regulates hematopoietic/erythroid differentiation. This chain is Signal transducer and activator of transcription 5B (STAT5B), found in Homo sapiens (Human).